We begin with the raw amino-acid sequence, 104 residues long: Transcription and mRNA export factor ENY2 (104 aa).

The segment covering 1 to 14 has biased composition (basic and acidic residues); sequence MADYGSDKKSRDNQ. The disordered stretch occupies residues 1–22; the sequence is MADYGSDKKSRDNQMRSAINQQ.

It belongs to the ENY2 family. As to quaternary structure, component of the nuclear pore complex (NPC)-associated TREX-2 complex (transcription and export complex 2). Component of the SAGA transcription coactivator-HAT complex. Within the SAGA complex, participates in a subcomplex of SAGA called the DUB module (deubiquitination module).

It is found in the nucleus. It localises to the nucleoplasm. Functionally, involved in mRNA export coupled transcription activation by association with both the TREX-2 and the SAGA complexes. The transcription regulatory histone acetylation (HAT) complex SAGA is a multiprotein complex that activates transcription by remodeling chromatin and mediating histone acetylation and deubiquitination. Within the SAGA complex, participates in a subcomplex that specifically deubiquitinates histones. The SAGA complex is recruited to specific gene promoters by activators, where it is required for transcription. The TREX-2 complex functions in docking export-competent ribonucleoprotein particles (mRNPs) to the nuclear entrance of the nuclear pore complex (nuclear basket). TREX-2 participates in mRNA export and accurate chromatin positioning in the nucleus by tethering genes to the nuclear periphery. This Ciona intestinalis (Transparent sea squirt) protein is Transcription and mRNA export factor ENY2.